The primary structure comprises 164 residues: Interferon gamma (164 aa).

Residues 1-19 (MTCQTYNLFVLSVIMIYYG) form the signal peptide. Residues N42 and N61 are each glycosylated (N-linked (GlcNAc...) asparagine).

It belongs to the type II (or gamma) interferon family. In terms of assembly, homodimer.

The protein resides in the secreted. In terms of biological role, produced by lymphocytes activated by specific antigens or mitogens. IFN-gamma, in addition to having antiviral activity, has important immunoregulatory functions. It is a potent activator of macrophages, it has antiproliferative effects on transformed cells and it can potentiate the antiviral and antitumor effects of the type I interferons. This chain is Interferon gamma (IFNG), found in Phasianus colchicus colchicus (Black-necked pheasant).